Here is a 233-residue protein sequence, read N- to C-terminus: Adenosine 5'-phosphosulfate reductase (233 aa).

C120, C121, C203, and C206 together coordinate [4Fe-4S] cluster. C229 acts as the Nucleophile; cysteine thiosulfonate intermediate in catalysis.

The protein belongs to the PAPS reductase family. CysH subfamily. It depends on [4Fe-4S] cluster as a cofactor.

The protein resides in the cytoplasm. It carries out the reaction [thioredoxin]-disulfide + sulfite + AMP + 2 H(+) = adenosine 5'-phosphosulfate + [thioredoxin]-dithiol. It participates in sulfur metabolism; hydrogen sulfide biosynthesis; sulfite from sulfate. Its function is as follows. Catalyzes the formation of sulfite from adenosine 5'-phosphosulfate (APS) using thioredoxin as an electron donor. The polypeptide is Adenosine 5'-phosphosulfate reductase (Bacillus velezensis (strain DSM 23117 / BGSC 10A6 / LMG 26770 / FZB42) (Bacillus amyloliquefaciens subsp. plantarum)).